Consider the following 1183-residue polypeptide: DNA-directed RNA polymerase subunit beta (1183 aa).

The span at 1151–1162 (EIEMADVDDEDA) shows a compositional bias: acidic residues. The disordered stretch occupies residues 1151-1183 (EIEMADVDDEDAAERKVDLQQKSAPESQKETTD).

It belongs to the RNA polymerase beta chain family. As to quaternary structure, the RNAP catalytic core consists of 2 alpha, 1 beta, 1 beta' and 1 omega subunit. When a sigma factor is associated with the core the holoenzyme is formed, which can initiate transcription.

The catalysed reaction is RNA(n) + a ribonucleoside 5'-triphosphate = RNA(n+1) + diphosphate. DNA-dependent RNA polymerase catalyzes the transcription of DNA into RNA using the four ribonucleoside triphosphates as substrates. This Staphylococcus epidermidis (strain ATCC 12228 / FDA PCI 1200) protein is DNA-directed RNA polymerase subunit beta.